The sequence spans 250 residues: Manganese transport system ATP-binding protein MntB (250 aa).

One can recognise an ABC transporter domain in the interval 5–236; it reads VKVDNLSVFY…MVAKTYQGNL (232 aa). 37-44 provides a ligand contact to ATP; the sequence is GPNGAGKS.

The protein belongs to the ABC transporter superfamily.

The protein resides in the cell membrane. Its function is as follows. This protein is probably a component of a manganese permease, a binding protein-dependent, ATP-driven transport system. Probably responsible for energy coupling to the transport system. This is Manganese transport system ATP-binding protein MntB (mntB) from Halalkalibacterium halodurans (strain ATCC BAA-125 / DSM 18197 / FERM 7344 / JCM 9153 / C-125) (Bacillus halodurans).